A 296-amino-acid chain; its full sequence is MATSSAALPRILGAGARAPSRWLGFLGKATPRPARPSRRTLGSATALMIRESEDSTDFNDKILNEPLKHSDFFNVKELFSVRSLFDARVHLGHKAGCRHRFMEPYIFGSRLDHDIIDLEQTATHLQLALNFTAHMAYRKGIILFISRNRQFSYLIENMARDCGEYAHTRYFRGGMLTNARLLFGPTVRLPDLIIFLHTLNNIFEPHVAVRDAAKMNIPTVGIVDTNCNPCLITYPVPGNDDSPLAVHLYCRLFQTAITRAKEKRQQVEALYRLQGQKEPGDQGPAHPPGADMSHSL.

Residues 274–296 (QGQKEPGDQGPAHPPGADMSHSL) are disordered.

Belongs to the universal ribosomal protein uS2 family. As to quaternary structure, component of the mitochondrial small ribosomal subunit (mt-SSU). Mature mammalian 55S mitochondrial ribosomes consist of a small (28S) and a large (39S) subunit. The 28S small subunit contains a 12S ribosomal RNA (12S mt-rRNA) and 30 different proteins. The 39S large subunit contains a 16S rRNA (16S mt-rRNA), a copy of mitochondrial valine transfer RNA (mt-tRNA(Val)), which plays an integral structural role, and 52 different proteins.

The protein localises to the mitochondrion. Its function is as follows. Required for mitoribosome formation and stability, and mitochondrial translation. This is Small ribosomal subunit protein uS2m (MRPS2) from Homo sapiens (Human).